The following is a 303-amino-acid chain: Peroxisomal trans-2-enoyl-CoA reductase (303 aa).

Residue 23-47 coordinates NADP(+); that stretch reads VTGGATGIGKAIVKELLELGSNVVI. Lysine 32 is subject to N6-succinyllysine. At serine 49 the chain carries Phosphoserine. The Proton acceptor role is filled by tyrosine 179. Residue tyrosine 179 is modified to Phosphotyrosine. Positions 301–303 match the Microbody targeting signal motif; it reads AKL.

The protein belongs to the short-chain dehydrogenases/reductases (SDR) family. In terms of assembly, interacts with PEX5, probably required to target it into peroxisomes.

The protein localises to the peroxisome. It carries out the reaction a (2E)-enoyl-CoA + NADPH + H(+) = a 2,3-saturated acyl-CoA + NADP(+). The catalysed reaction is (2E)-decenoyl-CoA + NADPH + H(+) = decanoyl-CoA + NADP(+). The enzyme catalyses (2E)-hexenoyl-CoA + NADPH + H(+) = hexanoyl-CoA + NADP(+). It catalyses the reaction (2E)-octenoyl-CoA + NADPH + H(+) = octanoyl-CoA + NADP(+). It carries out the reaction (2E)-dodecenoyl-CoA + NADPH + H(+) = dodecanoyl-CoA + NADP(+). The catalysed reaction is (2E)-tetradecenoyl-CoA + NADPH + H(+) = tetradecanoyl-CoA + NADP(+). The protein operates within lipid metabolism; fatty acid biosynthesis. Functionally, participates in chain elongation of fatty acids. Catalyzes the reduction of trans-2-enoyl-CoAs of varying chain lengths from 6:1 to 16:1, having maximum activity with 10:1 CoA. Has no 2,4-dienoyl-CoA reductase activity. The chain is Peroxisomal trans-2-enoyl-CoA reductase from Homo sapiens (Human).